A 182-amino-acid polypeptide reads, in one-letter code: ATP-dependent protease subunit HslV (182 aa).

T9 is a catalytic residue. 3 residues coordinate Na(+): A167, C170, and T173.

Belongs to the peptidase T1B family. HslV subfamily. As to quaternary structure, a double ring-shaped homohexamer of HslV is capped on each side by a ring-shaped HslU homohexamer. The assembly of the HslU/HslV complex is dependent on binding of ATP.

It is found in the cytoplasm. It carries out the reaction ATP-dependent cleavage of peptide bonds with broad specificity.. Its activity is regulated as follows. Allosterically activated by HslU binding. Protease subunit of a proteasome-like degradation complex believed to be a general protein degrading machinery. This Enterococcus faecalis (strain ATCC 700802 / V583) protein is ATP-dependent protease subunit HslV.